The following is a 793-amino-acid chain: Potassium transporter 18 (793 aa).

The Cytoplasmic portion of the chain corresponds to 1–53 (METRTNEYSRKGAMWELERNLDQPMDAEAGRLRNMYREKTYPTILLLRLAFQS). A helical membrane pass occupies residues 54–74 (LGVVFGDLGTSPLYVFYNIFP). Residues 75 to 86 (HGIEDTEQVIGA) are Extracellular-facing. The chain crosses the membrane as a helical span at residues 87–107 (LSLIIYSLTLIPLVKYVFIVL). The Cytoplasmic portion of the chain corresponds to 108–172 (RANDNGQGGT…WLEGHQFRKN (65 aa)). The chain crosses the membrane as a helical span at residues 173–193 (LILILVLFGTCMAVGDGILTP). The Extracellular segment spans residues 194–214 (AISVLSATGGIQVEEGRMRND). A helical transmembrane segment spans residues 215-235 (VVVIISVLILIGLFSMQHYGT). Residues 236–237 (DK) lie on the Cytoplasmic side of the membrane. Residues 238–258 (VSWLFAPIVFVWFILIGILGA) form a helical membrane-spanning segment. At 259–287 (VNICKYDHSVLKAFNPVYVYRYFKRGKTS) the chain is on the extracellular side. A helical membrane pass occupies residues 288–308 (WTSLGGIMLSITGTEALFADL). Residue Ser309 is a topological domain, cytoplasmic. Residues 310–330 (YFPVQAIQIAFTVVVFPCLLL) form a helical membrane-spanning segment. Residues 331–351 (QYTGQAAFIAANTNQVSHAFY) are Extracellular-facing. A helical membrane pass occupies residues 352–372 (ISLPAPILWPAFAVATAAAIV). Residues 373 to 409 (ASQATISATYSIIKQALALGCFPRVKIIHTSKKYLGQ) lie on the Cytoplasmic side of the membrane. The helical transmembrane segment at 410–430 (IYSPDINWILMVFCIAVTAGF) threads the bilayer. Over 431–442 (KNQSQIANAYGT) the chain is Extracellular. N-linked (GlcNAc...) asparagine glycosylation occurs at Asn432. The chain crosses the membrane as a helical span at residues 443 to 463 (AVIMVMLVTTFLMIPIMLLVW). At 464-468 (RSHWT) the chain is on the cytoplasmic side. The helical transmembrane segment at 469–489 (LVVAFTVLSLLVEIPYFSAVV) threads the bilayer. Over 490–494 (RKIDQ) the chain is Extracellular. The chain crosses the membrane as a helical span at residues 495–515 (GGWVPLVFAAGFMIIMYVWHY). Topologically, residues 516–793 (GTLKRYEFEM…MLNVGQVFYV (278 aa)) are cytoplasmic.

It belongs to the HAK/KUP transporter (TC 2.A.72.3) family.

The protein localises to the membrane. Functionally, high-affinity potassium transporter. The chain is Potassium transporter 18 (HAK18) from Oryza sativa subsp. japonica (Rice).